The primary structure comprises 511 residues: 2,3-bisphosphoglycerate-independent phosphoglycerate mutase (511 aa).

Mn(2+) is bound at residue aspartate 12. Tyrosine 36 is modified (phosphotyrosine). Serine 62 provides a ligand contact to Mn(2+). The active-site Phosphoserine intermediate is serine 62. Substrate is bound by residues histidine 123, 153–154 (RD), arginine 185, arginine 191, 261–264 (RPDR), and lysine 336. Residues aspartate 403, histidine 407, aspartate 444, histidine 445, and histidine 462 each coordinate Mn(2+).

This sequence belongs to the BPG-independent phosphoglycerate mutase family. In terms of assembly, monomer. Mn(2+) serves as cofactor.

The catalysed reaction is (2R)-2-phosphoglycerate = (2R)-3-phosphoglycerate. Its pathway is carbohydrate degradation; glycolysis; pyruvate from D-glyceraldehyde 3-phosphate: step 3/5. Functionally, essential for rapid growth and for sporulation. Catalyzes the interconversion of 2-phosphoglycerate and 3-phosphoglycerate. In Bacillus licheniformis (strain ATCC 14580 / DSM 13 / JCM 2505 / CCUG 7422 / NBRC 12200 / NCIMB 9375 / NCTC 10341 / NRRL NRS-1264 / Gibson 46), this protein is 2,3-bisphosphoglycerate-independent phosphoglycerate mutase.